We begin with the raw amino-acid sequence, 20 residues long: T cell receptor alpha joining 3 (20 aa).

In terms of assembly, alpha-beta TR is a heterodimer composed of an alpha and beta chain; disulfide-linked. The alpha-beta TR is associated with the transmembrane signaling CD3 coreceptor proteins to form the TR-CD3 (TcR or TCR). The assembly of alpha-beta TR heterodimers with CD3 occurs in the endoplasmic reticulum where a single alpha-beta TR heterodimer associates with one CD3D-CD3E heterodimer, one CD3G-CD3E heterodimer and one CD247 homodimer forming a stable octameric structure. CD3D-CD3E and CD3G-CD3E heterodimers preferentially associate with TR alpha and TR beta chains, respectively. The association of the CD247 homodimer is the last step of TcR assembly in the endoplasmic reticulum and is required for transport to the cell surface.

It is found in the cell membrane. Its function is as follows. J region of the variable domain of T cell receptor (TR) alpha chain that participates in the antigen recognition. Alpha-beta T cell receptors are antigen specific receptors which are essential to the immune response and are present on the cell surface of T lymphocytes. Recognize peptide-major histocompatibility (MH) (pMH) complexes that are displayed by antigen presenting cells (APC), a prerequisite for efficient T cell adaptive immunity against pathogens. Binding of alpha-beta TR to pMH complex initiates TR-CD3 clustering on the cell surface and intracellular activation of LCK that phosphorylates the ITAM motifs of CD3G, CD3D, CD3E and CD247 enabling the recruitment of ZAP70. In turn ZAP70 phosphorylates LAT, which recruits numerous signaling molecules to form the LAT signalosome. The LAT signalosome propagates signal branching to three major signaling pathways, the calcium, the mitogen-activated protein kinase (MAPK) kinase and the nuclear factor NF-kappa-B (NF-kB) pathways, leading to the mobilization of transcription factors that are critical for gene expression and essential for T cell growth and differentiation. The T cell repertoire is generated in the thymus, by V-(D)-J rearrangement. This repertoire is then shaped by intrathymic selection events to generate a peripheral T cell pool of self-MH restricted, non-autoaggressive T cells. Post-thymic interaction of alpha-beta TR with the pMH complexes shapes TR structural and functional avidity. The protein is T cell receptor alpha joining 3 of Homo sapiens (Human).